The sequence spans 850 residues: Trimethylamine-N-oxide reductase (850 aa).

Positions 1 to 39 (MKNKDSLHVSRRRFLAQLGGLTVAGMLGPSLLTPRSARA) form a signal peptide, tat-type signal. S191 is a binding site for Mo-bis(molybdopterin guanine dinucleotide).

The protein belongs to the prokaryotic molybdopterin-containing oxidoreductase family. Mo-bis(molybdopterin guanine dinucleotide) is required as a cofactor. In terms of processing, predicted to be exported by the Tat system. The position of the signal peptide cleavage has not been experimentally proven.

The protein resides in the periplasm. The enzyme catalyses trimethylamine + 2 Fe(III)-[cytochrome c] + H2O = trimethylamine N-oxide + 2 Fe(II)-[cytochrome c] + 3 H(+). Reduces trimethylamine-N-oxide (TMAO) into trimethylamine; an anaerobic reaction coupled to energy-yielding reactions. This Salmonella typhi protein is Trimethylamine-N-oxide reductase (torA).